The chain runs to 547 residues: Sodium-coupled neutral amino acid transporter 4 (547 aa).

The Extracellular portion of the chain corresponds to 1 to 104 (MDPIELRSVN…GLSYAMANTG (104 aa)). Phosphoserine is present on Ser49. Residues 105-125 (IVLFVIMLLTVAILSLYSVHL) traverse the membrane as a helical segment. The Cytoplasmic segment spans residues 126-151 (LLKTAKEGGSLIYEKLGEKAFGWPGK). A helical membrane pass occupies residues 152–172 (IGAFISITMQNIGAMSSYLFI). At 173-195 (IKYELPEVIRVFMGLEENTGEWY) the chain is on the extracellular side. A helical membrane pass occupies residues 196–216 (LNGNYLVLFVSVGIILPLSLL). Residues 217–220 (KNLG) lie on the Cytoplasmic side of the membrane. The helical transmembrane segment at 221–241 (YLGYTSGFSLTCMVFFVSVVI) threads the bilayer. At 242–332 (YKKFQIPCPL…PKYFVFNSRT (91 aa)) the chain is on the extracellular side. The cysteines at positions 249 and 321 are disulfide-linked. N-linked (GlcNAc...) asparagine glycans are attached at residues Asn260, Asn264, and Asn276. The chain crosses the membrane as a helical span at residues 333–353 (AYAIPILAFAFVCHPEVLPIY). Residues 354-369 (SELKDRSRRKMQTVSN) are Cytoplasmic-facing. Residues 370-390 (ISITGMLVMYLLAALFGYLSF) traverse the membrane as a helical segment. The Extracellular segment spans residues 391–411 (YGEVEDELLHAYSKVYTFDTA). A helical membrane pass occupies residues 412 to 432 (LLMVRLAVLVAVTLTVPIVLF). The Cytoplasmic portion of the chain corresponds to 433–453 (PIRTSVITLLFPRRPFSWVKH). Residues 454–474 (FGIAAIIIALNNVLVILVPTI) traverse the membrane as a helical segment. Residues 475–476 (KY) are Extracellular-facing. Residues 477–497 (IFGFIGASSATMLIFILPAAF) form a helical membrane-spanning segment. Residues 498 to 514 (YLKLVKKEPLRSPQKIG) lie on the Cytoplasmic side of the membrane. The helical transmembrane segment at 515-535 (ALVFLVTGIIFMMGSMALIII) threads the bilayer. The Extracellular segment spans residues 536–547 (DWIYNPPNPDHH).

It belongs to the amino acid/polyamine transporter 2 family. Post-translationally, the disulfide bond plays an important role in substrate transport, but has no effect on trafficking to the cell surface. Expressed predominantly in liver, and at lower level in skeletal muscle.

The protein localises to the cell membrane. It localises to the cell projection. The protein resides in the microvillus membrane. The catalysed reaction is L-alanine(in) + Na(+)(in) = L-alanine(out) + Na(+)(out). It carries out the reaction L-serine(in) + Na(+)(in) = L-serine(out) + Na(+)(out). It catalyses the reaction glycine(in) + Na(+)(in) = glycine(out) + Na(+)(out). The enzyme catalyses L-cysteine(in) + Na(+)(in) = L-cysteine(out) + Na(+)(out). The catalysed reaction is L-asparagine(in) + Na(+)(in) = L-asparagine(out) + Na(+)(out). It carries out the reaction L-threonine(in) + Na(+)(in) = L-threonine(out) + Na(+)(out). It catalyses the reaction L-proline(in) + Na(+)(in) = L-proline(out) + Na(+)(out). The enzyme catalyses L-methionine(in) + Na(+)(in) = L-methionine(out) + Na(+)(out). The catalysed reaction is L-glutamine(in) + Na(+)(in) = L-glutamine(out) + Na(+)(out). It carries out the reaction L-histidine(in) + Na(+)(in) = L-histidine(out) + Na(+)(out). Symporter that cotransports neutral amino acids and sodium ions from the extraccellular to the intracellular side of the cell membrane. The transport is electrogenic, pH dependent and partially tolerates substitution of Na(+) by Li(+). Preferentially transports smaller amino acids, such as glycine, L-alanine, L-serine, L-asparagine and L-threonine, followed by L-cysteine, L-histidine, L-proline and L-glutamine and L-methionine. The protein is Sodium-coupled neutral amino acid transporter 4 of Rattus norvegicus (Rat).